The primary structure comprises 910 residues: MAATVEGPELEAAAAAGDASEDSDAGSRALPFLGGNRLSLDLYPGGCQQLLHLCVQQPLQLLQVEFLRLSTHEDPQLLEATLAQLPQSLSCLRSLVLKGGQRRDTLGACLRGALTNLPAGLSGLAHLAHLDLSFNSLETLPACVLQMRGLGALLLSHNCLSELPEALGALPALTFLTVTHNRLQTLPPALGALSTLQRLDLSQNLLDTLPPEIGGLGSLLELNLASNRLQSLPASLAGLRSLRLLVLHSNLLASVPADLARLPLLTRLDLRDNQLRDLPPELLDAPFVRLQGNPLGEASPDAPSSPVAALIPEMPRLFLTSDLDSFPVTPQGCSVTLACGVRLQFPAGATATPITIRYRLLLPEPGLVPLGPHDALLSHVLELQPHGVAFQQDVGLWLLFTPPQARRCREVVVRTRNDNSWGDLETYLEEEAPQRLWAHCQVPHFSWFLVVSRPVSNACLVPPEGTLLCSSGHPGVKVIFPPGATEEPRRVSMQVVRMAGRELQALLGEPEAAVSPLLCLSQSGPPSFLQPVTVQLPLPSGITGLSLDRSRLHLLYWAPPAATWDDITAQVVLELTHLYARFQVTHFSWYWLWYTTKNCVGGLARKAWERLRLHRVNLIALQRRRDPEQVLLQCLPRNKVDATLRRLLERYRGPEPSDTVEMFEGEEFFAAFERGIDVDADRPDCVEGRICFVFYSHLKNVKEVYVTTTLDREAQAVRGQVSFYRGAVPVRVPEEAEAARQRKGADALWMATLPIKLPRLRGSEGPRRGAGLSLAPLNLGDAETGFLTQSNLLSVAGRLGLDWPAVALHLGVSYREVQRIRHEFRDDLDEQIRHMLFSWAERQAGQPGAVGLLVQALEQSDRQDVAEEVRAVLELGRRKYQDSIRRMGLAPKDPALPGSSAPQPPEPAQA.

The tract at residues 1–25 (MAATVEGPELEAAAAAGDASEDSDA) is disordered. Residue alanine 2 is modified to N-acetylalanine. LRR repeat units follow at residues 126–147 (HLAH…VLQM), 149–171 (GLGA…GALP), 172–194 (ALTF…GALS), 195–216 (TLQR…IGGL), 218–240 (SLLE…AGLR), 241–263 (SLRL…ARLP), and 264–285 (LLTR…LLDA). Phosphoserine is present on residues serine 299 and serine 305. ZU5 domains follow at residues 322–454 (DLDS…VSRP) and 455–596 (VSNA…WYTT). Peptidase S68 regions lie at residues 423-452 (DLET…LVVS) and 566-594 (DITA…WLWY). Residues histidine 444, serine 446, histidine 586, and serine 588 contribute to the active site. A UPA domain region spans residues 580 to 716 (ARFQVTHFSW…TTTLDREAQA (137 aa)). Residues 788-873 (TQSNLLSVAG…DVAEEVRAVL (86 aa)) form the Death domain. The interval 884-910 (IRRMGLAPKDPALPGSSAPQPPEPAQA) is disordered.

Forms a complex named the PIDDosome with CASP2 and CRADD. Forms a complex with IKBKG and RIPK1. Interacts with FADD and MADD. In terms of processing, undergoes autoproteolytic processing whose extent either directs cells towards survival or apoptotic pathways. Autoproteolytically cleaved into two main fragments PIDD-N and PIDD-C. PIDD-C can be further processed into PIDD-CC, a processing which is enhanced by DNA damage. The cleavage producing PIDD-C is required for translocation of PIDD1 to the nucleus upon DNA damage and activation of NF-kappa-B. PIDD-CC mediates the interaction with CRADD and the cleavage producing PIDD-CC is required for the activation of CASP2. PIDD-N remains associated with PIDD-C and PIDD-CC after cleavage. As to expression, ubiquitous.

Its subcellular location is the cytoplasm. It is found in the nucleus. Component of the DNA damage/stress response pathway that functions downstream of p53/TP53 and can either promote cell survival or apoptosis. Associated with CRADD and the CASP2 caspase, it forms the PIDDosome a complex that activates CASP2 and triggers apoptosis. Associated with IKBKG and RIPK1, it enhances sumoylation and ubiquitination of IKBKG which is important for activation of the transcription factor NF-kappa-B. The protein is p53-induced death domain-containing protein 1 of Homo sapiens (Human).